Consider the following 159-residue polypeptide: Large ribosomal subunit protein uL10 (159 aa).

Belongs to the universal ribosomal protein uL10 family. In terms of assembly, part of the ribosomal stalk of the 50S ribosomal subunit. The N-terminus interacts with L11 and the large rRNA to form the base of the stalk. The C-terminus forms an elongated spine to which L12 dimers bind in a sequential fashion forming a multimeric L10(L12)X complex.

Its function is as follows. Forms part of the ribosomal stalk, playing a central role in the interaction of the ribosome with GTP-bound translation factors. The chain is Large ribosomal subunit protein uL10 from Nautilia profundicola (strain ATCC BAA-1463 / DSM 18972 / AmH).